Here is a 573-residue protein sequence, read N- to C-terminus: Urease subunit alpha 2 (573 aa).

In terms of domain architecture, Urease spans 135-573; it reads GGMDTHVHYI…ISLNQLYFFS (439 aa). Residues histidine 140, histidine 142, and lysine 223 each coordinate Ni(2+). Lysine 223 carries the N6-carboxylysine modification. Histidine 225 lines the substrate pocket. Ni(2+) contacts are provided by histidine 252 and histidine 278. Histidine 326 (proton donor) is an active-site residue. Aspartate 366 contacts Ni(2+).

This sequence belongs to the metallo-dependent hydrolases superfamily. Urease alpha subunit family. In terms of assembly, heterotrimer of UreA (gamma), UreB (beta) and UreC (alpha) subunits. Three heterotrimers associate to form the active enzyme. Ni cation is required as a cofactor. Post-translationally, carboxylation allows a single lysine to coordinate two nickel ions.

The protein localises to the cytoplasm. It carries out the reaction urea + 2 H2O + H(+) = hydrogencarbonate + 2 NH4(+). The protein operates within nitrogen metabolism; urea degradation; CO(2) and NH(3) from urea (urease route): step 1/1. Functionally, disrupting the ure2 operon has no effect on urease activity, or pathogen survival in BALB/c mice when inoculated by gavage, but confers slightly enhanced resistance to low pH killing in vitro. The sequence is that of Urease subunit alpha 2 from Brucella suis biovar 1 (strain 1330).